A 307-amino-acid chain; its full sequence is Ribosomal RNA small subunit methyltransferase H (307 aa).

S-adenosyl-L-methionine contacts are provided by residues 34–36 (GGH), Asp54, Phe79, Asp101, and Gln108.

The protein belongs to the methyltransferase superfamily. RsmH family.

The protein resides in the cytoplasm. The enzyme catalyses cytidine(1402) in 16S rRNA + S-adenosyl-L-methionine = N(4)-methylcytidine(1402) in 16S rRNA + S-adenosyl-L-homocysteine + H(+). Functionally, specifically methylates the N4 position of cytidine in position 1402 (C1402) of 16S rRNA. The sequence is that of Ribosomal RNA small subunit methyltransferase H from Ruthia magnifica subsp. Calyptogena magnifica.